The sequence spans 216 residues: Small ribosomal subunit protein uS3c (216 aa).

One can recognise a KH type-2 domain in the interval 43-118 (IKNYLQKNMR…KLNIAITRIT (76 aa)).

This sequence belongs to the universal ribosomal protein uS3 family. As to quaternary structure, part of the 30S ribosomal subunit.

Its subcellular location is the plastid. The protein resides in the chloroplast. The chain is Small ribosomal subunit protein uS3c (rps3) from Eucalyptus globulus subsp. globulus (Tasmanian blue gum).